A 223-amino-acid chain; its full sequence is Adenylate kinase (223 aa).

Residue 10–15 (GAGKGT) coordinates ATP. Residues 30–59 (STGDILRQAVKEGTEVGKIAGELMKAGKLI) are NMP. Residues Thr-31, Arg-36, 57 to 59 (KLI), 85 to 88 (GFPR), and Gln-92 each bind AMP. The LID stretch occupies residues 126-163 (GRYVCAQCGAGYHDEFKRPHKEGVCDICGSTEFKRRPD). Arg-127 is a binding site for ATP. Cys-130, Cys-133, Cys-150, and Cys-153 together coordinate Zn(2+). AMP-binding residues include Arg-160 and Arg-172. Leu-200 serves as a coordination point for ATP.

Belongs to the adenylate kinase family. As to quaternary structure, monomer.

Its subcellular location is the cytoplasm. The catalysed reaction is AMP + ATP = 2 ADP. It functions in the pathway purine metabolism; AMP biosynthesis via salvage pathway; AMP from ADP: step 1/1. Catalyzes the reversible transfer of the terminal phosphate group between ATP and AMP. Plays an important role in cellular energy homeostasis and in adenine nucleotide metabolism. The protein is Adenylate kinase of Zymomonas mobilis subsp. mobilis (strain ATCC 31821 / ZM4 / CP4).